A 300-amino-acid chain; its full sequence is 4-hydroxy-tetrahydrodipicolinate synthase (300 aa).

Pyruvate is bound at residue Thr-57. Residue Tyr-145 is the Proton donor/acceptor of the active site. Lys-173 serves as the catalytic Schiff-base intermediate with substrate. Ile-213 provides a ligand contact to pyruvate.

The protein belongs to the DapA family. In terms of assembly, homotetramer; dimer of dimers.

The protein localises to the cytoplasm. It carries out the reaction L-aspartate 4-semialdehyde + pyruvate = (2S,4S)-4-hydroxy-2,3,4,5-tetrahydrodipicolinate + H2O + H(+). It functions in the pathway amino-acid biosynthesis; L-lysine biosynthesis via DAP pathway; (S)-tetrahydrodipicolinate from L-aspartate: step 3/4. Its function is as follows. Catalyzes the condensation of (S)-aspartate-beta-semialdehyde [(S)-ASA] and pyruvate to 4-hydroxy-tetrahydrodipicolinate (HTPA). In Corynebacterium urealyticum (strain ATCC 43042 / DSM 7109), this protein is 4-hydroxy-tetrahydrodipicolinate synthase.